The sequence spans 51 residues: Large ribosomal subunit protein eL39 (51 aa).

The protein belongs to the eukaryotic ribosomal protein eL39 family.

This is Large ribosomal subunit protein eL39 (RpL39) from Drosophila melanogaster (Fruit fly).